Reading from the N-terminus, the 149-residue chain is Large ribosomal subunit protein eL19 (149 aa).

Basic and acidic residues predominate over residues 55 to 69 (KGISSARKKEVQEQK). The segment at 55–93 (KGISSARKKEVQEQKRKGKRKGPGSRRGAKGARTPKKEK) is disordered. Residues 70-88 (RKGKRKGPGSRRGAKGART) show a composition bias toward basic residues.

Belongs to the eukaryotic ribosomal protein eL19 family. As to quaternary structure, part of the 50S ribosomal subunit.

Functionally, binds to the 23S rRNA. The protein is Large ribosomal subunit protein eL19 of Methanococcus vannielii.